Reading from the N-terminus, the 372-residue chain is 4-hydroxy-3-methylbut-2-en-1-yl diphosphate synthase (flavodoxin) (372 aa).

Residues C270, C273, C305, and E312 each contribute to the [4Fe-4S] cluster site.

Belongs to the IspG family. Requires [4Fe-4S] cluster as cofactor.

The catalysed reaction is (2E)-4-hydroxy-3-methylbut-2-enyl diphosphate + oxidized [flavodoxin] + H2O + 2 H(+) = 2-C-methyl-D-erythritol 2,4-cyclic diphosphate + reduced [flavodoxin]. The protein operates within isoprenoid biosynthesis; isopentenyl diphosphate biosynthesis via DXP pathway; isopentenyl diphosphate from 1-deoxy-D-xylulose 5-phosphate: step 5/6. Its function is as follows. Converts 2C-methyl-D-erythritol 2,4-cyclodiphosphate (ME-2,4cPP) into 1-hydroxy-2-methyl-2-(E)-butenyl 4-diphosphate. This chain is 4-hydroxy-3-methylbut-2-en-1-yl diphosphate synthase (flavodoxin), found in Salmonella gallinarum (strain 287/91 / NCTC 13346).